The following is a 190-amino-acid chain: Elongation factor P-like protein (190 aa).

It belongs to the elongation factor P family.

The protein is Elongation factor P-like protein of Pectobacterium carotovorum subsp. carotovorum (strain PC1).